A 220-amino-acid chain; its full sequence is Cytidylate kinase (220 aa).

Residue 9-17 (GPAASGKST) participates in ATP binding.

It belongs to the cytidylate kinase family. Type 1 subfamily.

It is found in the cytoplasm. It catalyses the reaction CMP + ATP = CDP + ADP. The enzyme catalyses dCMP + ATP = dCDP + ADP. The protein is Cytidylate kinase of Thermotoga neapolitana (strain ATCC 49049 / DSM 4359 / NBRC 107923 / NS-E).